The sequence spans 829 residues: DNA ligase (829 aa).

Positions 1-23 (MPAQTSRARPVEEMTAAQAREAH) are disordered. NAD(+) contacts are provided by residues 47 to 51 (DAEYD), 96 to 97 (SL), and Glu-130. The active-site N6-AMP-lysine intermediate is Lys-132. The NAD(+) site is built by Arg-153, Glu-190, Lys-306, and Lys-330. Zn(2+)-binding residues include Cys-453, Cys-456, Cys-477, and Cys-483. The region spanning 750 to 829 (AAAAVFSGQT…AEWLAMVEAA (80 aa)) is the BRCT domain.

This sequence belongs to the NAD-dependent DNA ligase family. LigA subfamily. The cofactor is Mg(2+). It depends on Mn(2+) as a cofactor.

The enzyme catalyses NAD(+) + (deoxyribonucleotide)n-3'-hydroxyl + 5'-phospho-(deoxyribonucleotide)m = (deoxyribonucleotide)n+m + AMP + beta-nicotinamide D-nucleotide.. In terms of biological role, DNA ligase that catalyzes the formation of phosphodiester linkages between 5'-phosphoryl and 3'-hydroxyl groups in double-stranded DNA using NAD as a coenzyme and as the energy source for the reaction. It is essential for DNA replication and repair of damaged DNA. This Methylobacterium nodulans (strain LMG 21967 / CNCM I-2342 / ORS 2060) protein is DNA ligase.